The following is a 307-amino-acid chain: Elongation factor Ts (307 aa).

The tract at residues 80-83 (TDFV) is involved in Mg(2+) ion dislocation from EF-Tu.

It belongs to the EF-Ts family.

Its subcellular location is the cytoplasm. In terms of biological role, associates with the EF-Tu.GDP complex and induces the exchange of GDP to GTP. It remains bound to the aminoacyl-tRNA.EF-Tu.GTP complex up to the GTP hydrolysis stage on the ribosome. This is Elongation factor Ts from Bradyrhizobium sp. (strain ORS 278).